We begin with the raw amino-acid sequence, 367 residues long: MLLLRCQLKQAPPQKVSFRFCVVMGKQQSKLKHSTYKYGRPDEIIEERIQTKAFQEYSPAHMDTVSVVAALNSDLCVSGGKDKTVVAYNWKTGNVVKRFKGHEHEITKVACIPKSSQFFSASRDRMVMMWDLHGSSQPRQQLCGHAMVVTGLAVSPDSSQLCTGSRDNTLLLWDVVTGQSVERASVSRNVVTHLCWVPREPYILQTSEDKTLRLWDSRGLQVAHMFPAKQHIQTYCEVSVDGHKCISCSNGFGGEGCEATLWDLRQTRNRICEYKGHFQTVASCVFLPRALALMPLIATSSHDCKVKIWNQDTGACLFTLSLDGSGPLTSLAVGDAISLLCASFNRGIHLLRMDHSQGLELQEVAAF.

7 WD repeats span residues 53–90, 94–132, 137–175, 179–217, 221–264, 269–311, and 315–353; these read AFQEYSPAHMDTVSVVAALNSDLCVSGGKDKTVVAYNW, NVVKRFKGHEHEITKVACIPKSSQFFSASRDRMVMMWDL, QPRQQLCGHAMVVTGLAVSPDSSQLCTGSRDNTLLLWDV, QSVERASVSRNVVTHLCWVPREPYILQTSEDKTLRLWDS, QVAH…LWDL, NRIC…IWNQ, and ACLFTLSLDGSGPLTSLAVGDAISLLCASFNRGIHLLRM.

The polypeptide is WD repeat-containing protein 31 (WDR31) (Homo sapiens (Human)).